The primary structure comprises 238 residues: uncharacterized protein (238 aa).

Basic residues predominate over residues 1 to 10; it reads MARGQNIRKR. Disordered stretches follow at residues 1 to 26 and 195 to 238; these read MARGQNIRKRTFSDMDTPSDKNIGIH and LNTS…YDSF.

It belongs to the asfivirus DP238L family.

This is an uncharacterized protein from Ornithodoros (relapsing fever ticks).